A 250-amino-acid chain; its full sequence is Cell division protein ZapD (250 aa).

It belongs to the ZapD family. In terms of assembly, interacts with FtsZ.

The protein localises to the cytoplasm. Cell division factor that enhances FtsZ-ring assembly. Directly interacts with FtsZ and promotes bundling of FtsZ protofilaments, with a reduction in FtsZ GTPase activity. This Yersinia pestis bv. Antiqua (strain Antiqua) protein is Cell division protein ZapD.